The sequence spans 176 residues: Trypsin inhibitor 1B (176 aa).

2 disulfide bridges follow: C39–C83 and C132–C143.

This sequence belongs to the protease inhibitor I3 (leguminous Kunitz-type inhibitor) family.

Its function is as follows. Inhibits trypsin stoichiometrically. This is Trypsin inhibitor 1B from Erythrina variegata (Indian coral tree).